The sequence spans 1079 residues: Psi-producing oxygenase A (1079 aa).

The tract at residues 105–446 is linoleate 8R-lipoxygenase; the sequence is TNTFLTTLWN…DGSYDDNDLV (342 aa). A heme b-binding site is contributed by His202. Residue Tyr374 is part of the active site. Residue His377 participates in heme b binding. The tract at residues 654-1079 is 9,12-octadecadienoate 8-hydroperoxide 8R-isomerase; it reads QFINSHSACM…WDGDLPEVKE (426 aa).

The protein belongs to the peroxidase family. Homotetramer. It depends on heme b as a cofactor.

It catalyses the reaction (9Z,12Z)-octadecadienoate + O2 = (8R,9Z,12Z)-8-hydroperoxyoctadeca-9,12-dienoate. The catalysed reaction is (8R,9Z,12Z)-8-hydroperoxyoctadeca-9,12-dienoate = (5S,8R,9Z,12Z)-5,8-dihydroxyoctadeca-9,12-dienoate. Functionally, bifunctional heme-containing enzyme that oxidizes linoleic acid to (8R,9Z,12Z)-8-hydroperoxyoctadeca-9,12-dienoate (within the N-terminal heme peroxidase domain), which is subsequently isomerized to (5S,8R,9Z,12Z)-5,8-dihydroxyoctadeca-9,12-dienoate (within the C-terminal P450 heme thiolate domain). Oxidized unsaturated fatty acids, so-called oxylipins, derived from endogenous fatty acids, influence the development of the asexual conidiophores and sexual cleistothecia and regulate the secondary metabolism. These substances were collectively named psi factors and are primarily a mixture of hydroxylated oleic, linoleic and alpha-linolenic acids. They are termed psi-beta, psi-alpha, and psi-gamma, respectively. Oxylipins may also serve as activators of mammalian immune responses contributing to enhanced resistance to opportunistic fungi and as factors that modulate fungal development contributing to resistance to host defenses. This chain is Psi-producing oxygenase A (ppoA), found in Aspergillus fumigatus (strain CBS 144.89 / FGSC A1163 / CEA10) (Neosartorya fumigata).